The chain runs to 83 residues: Small ribosomal subunit protein bS18 (83 aa).

Belongs to the bacterial ribosomal protein bS18 family. As to quaternary structure, part of the 30S ribosomal subunit. Forms a tight heterodimer with protein bS6.

Functionally, binds as a heterodimer with protein bS6 to the central domain of the 16S rRNA, where it helps stabilize the platform of the 30S subunit. In Methylobacterium sp. (strain 4-46), this protein is Small ribosomal subunit protein bS18.